Here is a 262-residue protein sequence, read N- to C-terminus: Nickel import ATP-binding protein NikD (262 aa).

Residues 6–249 (LAIEGLTATT…PGHEVTRMLV (244 aa)) enclose the ABC transporter domain. 42-49 (GASGSGKS) contacts ATP.

This sequence belongs to the ABC transporter superfamily. Nickel importer (TC 3.A.1.5.3) family. As to quaternary structure, the complex is composed of two ATP-binding proteins (NikD and NikE), two transmembrane proteins (NikB and NikC) and a solute-binding protein (NikA).

It localises to the cell inner membrane. It catalyses the reaction Ni(2+)(out) + ATP + H2O = Ni(2+)(in) + ADP + phosphate + H(+). Functionally, part of the ABC transporter complex NikABCDE involved in nickel import. Responsible for energy coupling to the transport system. The sequence is that of Nickel import ATP-binding protein NikD from Brucella abortus biovar 1 (strain 9-941).